The sequence spans 208 residues: Probable splicing factor, arginine/serine-rich 5 (208 aa).

One can recognise an RRM domain in the interval 2-74 (PRLYLGKIPY…MRLVVEMARG (73 aa)). The disordered stretch occupies residues 71-208 (MARGKPRGND…RSPSPGSPKD (138 aa)). Residues 84 to 123 (SRSPRRRSRSPRRRSRTPPRRRSRSRDRKRSRRSRSRSSS) show a composition bias toward basic residues. The span at 128 to 153 (PVRESRRRSESRSPSPKRDLKREASR) shows a compositional bias: basic and acidic residues.

Belongs to the splicing factor SR family. In terms of processing, extensively phosphorylated on serine residues in the RS domain.

It is found in the nucleus. In terms of biological role, plays a functionally redundant role in shifting germ cell sexual differentiation in hermaphrodites. The sequence is that of Probable splicing factor, arginine/serine-rich 5 (rsp-5) from Caenorhabditis elegans.